The chain runs to 251 residues: Triosephosphate isomerase (251 aa).

9-11 (NWK) is a substrate binding site. Catalysis depends on His94, which acts as the Electrophile. Catalysis depends on Glu166, which acts as the Proton acceptor. Substrate contacts are provided by residues Gly172, Ser211, and 232-233 (GG).

The protein belongs to the triosephosphate isomerase family. As to quaternary structure, homodimer.

Its subcellular location is the cytoplasm. It carries out the reaction D-glyceraldehyde 3-phosphate = dihydroxyacetone phosphate. The protein operates within carbohydrate biosynthesis; gluconeogenesis. It participates in carbohydrate degradation; glycolysis; D-glyceraldehyde 3-phosphate from glycerone phosphate: step 1/1. Involved in the gluconeogenesis. Catalyzes stereospecifically the conversion of dihydroxyacetone phosphate (DHAP) to D-glyceraldehyde-3-phosphate (G3P). This is Triosephosphate isomerase from Xanthomonas euvesicatoria pv. vesicatoria (strain 85-10) (Xanthomonas campestris pv. vesicatoria).